The sequence spans 129 residues: Small ribosomal subunit protein uS13m (129 aa).

The segment at 92–129 (HQDGSPLRGQRTHTNARTARKQIRKGNERRLPKEQATD) is disordered. The span at 116 to 129 (KGNERRLPKEQATD) shows a compositional bias: basic and acidic residues.

Belongs to the universal ribosomal protein uS13 family. As to quaternary structure, part of the small ribosomal subunit.

The protein resides in the mitochondrion. Located at the top of the head of the small subunit, it contacts several helices of the 18S rRNA. The chain is Small ribosomal subunit protein uS13m (RPS13) from Zea mays (Maize).